The chain runs to 263 residues: Trem-like transcript 4 protein (263 aa).

A signal peptide spans 1-28; it reads MAWRYSQLLLVPVQLVFLASVCCPGVWG. In terms of domain architecture, Ig-like V-type spans 29 to 132; that stretch reads STVSEELHRM…LREVTVLRNI (104 aa). The Extracellular segment spans residues 29-200; the sequence is STVSEELHRM…GWTSPGLLVS (172 aa). A disulfide bridge links cysteine 47 with cysteine 116. The N-linked (GlcNAc...) asparagine glycan is linked to asparagine 100. A disordered region spans residues 168 to 191; sequence SPEETTDSSINGTGHRNQSSSSPG. The helical transmembrane segment at 201 to 221 threads the bilayer; that stretch reads VQYGLLLLKALMLSVFCVLLC. Over 222–263 the chain is Cytoplasmic; the sequence is WRSGQGREYMAETMELSKLPHISKSLDTVSHISGYEKKANWY.

As to quaternary structure, interacts with TYROBP/DAP12. As to expression, predominantly expressed in spleen, with highest levels on selected populations of macrophages, including red pulp macrophages, and on subsets of dendritic cells (DC), mostly on CD8alpha(+) DC (at protein level). Also expressed on blood and spleen Ly6C(low) monocytes (at protein level). Not expressed on lymphocytes or granulocytes (at protein level).

The protein resides in the cell membrane. Positively regulates Toll-like receptor signaling via TLR7, TLR9 and TLR13 in neutrophils and splenic macrophages. Regulates TLR7 signaling by controlling ligand-induced recruitment of TLR7 from the endoplasmic reticulum to endosomes and lysosomes. Positively regulates Toll-like receptor TLR9-induced production of inflammatory cytokines but is dispensable for IFNB1 production. Involved in the anti-viral response to several viruses including influenza virus, vesicular stomatitis virus and cytomegalovirus. Binds to late apoptotic, and necrotic cells, but not living or early apoptotic cells, but is not essential for uptake of dying cells by dendritic cells (DCs). Does not bind nucleic acids. May participate in antigen presentation. The protein is Trem-like transcript 4 protein (Treml4) of Mus musculus (Mouse).